Reading from the N-terminus, the 103-residue chain is Large ribosomal subunit protein uL24 (103 aa).

The protein belongs to the universal ribosomal protein uL24 family. As to quaternary structure, part of the 50S ribosomal subunit.

One of two assembly initiator proteins, it binds directly to the 5'-end of the 23S rRNA, where it nucleates assembly of the 50S subunit. In terms of biological role, one of the proteins that surrounds the polypeptide exit tunnel on the outside of the subunit. The polypeptide is Large ribosomal subunit protein uL24 (Actinobacillus pleuropneumoniae serotype 3 (strain JL03)).